The primary structure comprises 125 residues: Small ribosomal subunit protein uS12 (125 aa).

At Asp89 the chain carries 3-methylthioaspartic acid. The tract at residues 106–125 (GVKDRKQSRSKYGAKRPKKA) is disordered. Residues 113 to 125 (SRSKYGAKRPKKA) show a composition bias toward basic residues.

This sequence belongs to the universal ribosomal protein uS12 family. As to quaternary structure, part of the 30S ribosomal subunit. Contacts proteins S8 and S17. May interact with IF1 in the 30S initiation complex.

Functionally, with S4 and S5 plays an important role in translational accuracy. Its function is as follows. Interacts with and stabilizes bases of the 16S rRNA that are involved in tRNA selection in the A site and with the mRNA backbone. Located at the interface of the 30S and 50S subunits, it traverses the body of the 30S subunit contacting proteins on the other side and probably holding the rRNA structure together. The combined cluster of proteins S8, S12 and S17 appears to hold together the shoulder and platform of the 30S subunit. The protein is Small ribosomal subunit protein uS12 of Variovorax paradoxus (strain S110).